The following is a 117-amino-acid chain: Transcription elongation factor A protein-like 8 (117 aa).

Basic and acidic residues-rich tracts occupy residues 1-10 and 61-75; these read MQKSCEENEG and FKEDTPVRHLDPEEM. Residues 1-75 form a disordered region; the sequence is MQKSCEENEG…PVRHLDPEEM (75 aa). Positions 73–100 form a coiled coil; that stretch reads EEMIRGVDELERLREEIRRVRNKFVMMH.

It belongs to the TFS-II family. TFA subfamily.

The protein localises to the nucleus. May be involved in transcriptional regulation. This is Transcription elongation factor A protein-like 8 (TCEAL8) from Homo sapiens (Human).